A 246-amino-acid chain; its full sequence is Probable phosphatase PBPRB2022 (246 aa).

H8, H10, H16, H41, E74, H102, H132, D193, and H195 together coordinate Zn(2+).

This sequence belongs to the PHP family. It depends on Zn(2+) as a cofactor.

This Photobacterium profundum (strain SS9) protein is Probable phosphatase PBPRB2022.